Consider the following 377-residue polypeptide: Chaperone protein DnaJ (377 aa).

The 66-residue stretch at 5–70 (DYYEILGVSK…QKRAAYDQYG (66 aa)) folds into the J domain. The segment at 132–210 (GVTKEIRIPT…CHGHGRVEKT (79 aa)) adopts a CR-type zinc-finger fold. Residues Cys145, Cys148, Cys162, Cys165, Cys184, Cys187, Cys198, and Cys201 each coordinate Zn(2+). CXXCXGXG motif repeat units follow at residues 145–152 (CDVCHGSG), 162–169 (CPTCHGAG), 184–191 (CPHCQGRG), and 198–205 (CNKCHGHG).

Belongs to the DnaJ family. In terms of assembly, homodimer. The cofactor is Zn(2+).

Its subcellular location is the cytoplasm. Its function is as follows. Participates actively in the response to hyperosmotic and heat shock by preventing the aggregation of stress-denatured proteins and by disaggregating proteins, also in an autonomous, DnaK-independent fashion. Unfolded proteins bind initially to DnaJ; upon interaction with the DnaJ-bound protein, DnaK hydrolyzes its bound ATP, resulting in the formation of a stable complex. GrpE releases ADP from DnaK; ATP binding to DnaK triggers the release of the substrate protein, thus completing the reaction cycle. Several rounds of ATP-dependent interactions between DnaJ, DnaK and GrpE are required for fully efficient folding. Also involved, together with DnaK and GrpE, in the DNA replication of plasmids through activation of initiation proteins. The polypeptide is Chaperone protein DnaJ (Klebsiella pneumoniae (strain 342)).